The following is a 456-amino-acid chain: tRNA-2-methylthio-N(6)-dimethylallyladenosine synthase (456 aa).

The MTTase N-terminal domain maps to 9–126 (KKLYIKTHGC…LPEMMETKKS (118 aa)). Residues Cys18, Cys55, Cys89, Cys163, Cys167, and Cys170 each contribute to the [4Fe-4S] cluster site. A Radical SAM core domain is found at 149-381 (DADGVSAFVS…QDRITQQAMA (233 aa)). A TRAM domain is found at 384–448 (RRMVGNTERI…PNSLRGSLIA (65 aa)).

Belongs to the methylthiotransferase family. MiaB subfamily. In terms of assembly, monomer. The cofactor is [4Fe-4S] cluster.

It is found in the cytoplasm. The enzyme catalyses N(6)-dimethylallyladenosine(37) in tRNA + (sulfur carrier)-SH + AH2 + 2 S-adenosyl-L-methionine = 2-methylsulfanyl-N(6)-dimethylallyladenosine(37) in tRNA + (sulfur carrier)-H + 5'-deoxyadenosine + L-methionine + A + S-adenosyl-L-homocysteine + 2 H(+). Catalyzes the methylthiolation of N6-(dimethylallyl)adenosine (i(6)A), leading to the formation of 2-methylthio-N6-(dimethylallyl)adenosine (ms(2)i(6)A) at position 37 in tRNAs that read codons beginning with uridine. The polypeptide is tRNA-2-methylthio-N(6)-dimethylallyladenosine synthase (Cellvibrio japonicus (strain Ueda107) (Pseudomonas fluorescens subsp. cellulosa)).